Reading from the N-terminus, the 440-residue chain is NADH-quinone oxidoreductase subunit D (440 aa).

The protein belongs to the complex I 49 kDa subunit family. In terms of assembly, NDH-1 is composed of 14 different subunits. Subunits NuoB, C, D, E, F, and G constitute the peripheral sector of the complex.

It localises to the cell membrane. The catalysed reaction is a quinone + NADH + 5 H(+)(in) = a quinol + NAD(+) + 4 H(+)(out). In terms of biological role, NDH-1 shuttles electrons from NADH, via FMN and iron-sulfur (Fe-S) centers, to quinones in the respiratory chain. The immediate electron acceptor for the enzyme in this species is believed to be a menaquinone. Couples the redox reaction to proton translocation (for every two electrons transferred, four hydrogen ions are translocated across the cytoplasmic membrane), and thus conserves the redox energy in a proton gradient. This is NADH-quinone oxidoreductase subunit D from Mycobacterium bovis (strain ATCC BAA-935 / AF2122/97).